A 218-amino-acid polypeptide reads, in one-letter code: 5-oxoprolinase subunit B (218 aa).

This sequence belongs to the PxpB family. In terms of assembly, forms a complex composed of PxpA, PxpB and PxpC.

The enzyme catalyses 5-oxo-L-proline + ATP + 2 H2O = L-glutamate + ADP + phosphate + H(+). In terms of biological role, catalyzes the cleavage of 5-oxoproline to form L-glutamate coupled to the hydrolysis of ATP to ADP and inorganic phosphate. In Escherichia coli O157:H7, this protein is 5-oxoprolinase subunit B.